A 328-amino-acid chain; its full sequence is L-lactate dehydrogenase (328 aa).

NAD(+) is bound by residues Val-18, Glu-39, Lys-46, Tyr-71, and 85-86 (GA). Substrate is bound by residues Gln-88 and Arg-94. Residues Ser-107, 124 to 126 (AAN), and Ser-149 each bind NAD(+). Residue 126-129 (NPVD) coordinates substrate. 154 to 157 (DTAR) contacts substrate. 2 residues coordinate beta-D-fructose 1,6-bisphosphate: Arg-159 and His-174. His-181 serves as the catalytic Proton acceptor. Tyr-226 bears the Phosphotyrosine mark. Position 235 (Thr-235) interacts with substrate.

It belongs to the LDH/MDH superfamily. LDH family. Homotetramer.

It is found in the cytoplasm. It catalyses the reaction (S)-lactate + NAD(+) = pyruvate + NADH + H(+). It functions in the pathway fermentation; pyruvate fermentation to lactate; (S)-lactate from pyruvate: step 1/1. Allosterically activated by fructose 1,6-bisphosphate (FBP). Its function is as follows. Catalyzes the conversion of lactate to pyruvate. The polypeptide is L-lactate dehydrogenase (Streptococcus mutans serotype c (strain ATCC 700610 / UA159)).